Reading from the N-terminus, the 538-residue chain is Histone-arginine methyltransferase CARMER (538 aa).

Residues 148 to 457 (ASQYFQFYGY…QSYDVTIDLH (310 aa)) enclose the SAM-dependent MTase PRMT-type domain. 6 residues coordinate S-adenosyl-L-methionine: Q161, R170, G194, E216, E245, and T273. R508 carries the post-translational modification Asymmetric dimethylarginine; by autocatalysis.

This sequence belongs to the class I-like SAM-binding methyltransferase superfamily. Protein arginine N-methyltransferase family. In terms of assembly, homodimer. In terms of processing, the dimethylated protein is the major form.

The protein resides in the cytoplasm. The protein localises to the nucleus. It catalyses the reaction L-arginyl-[protein] + 2 S-adenosyl-L-methionine = N(omega),N(omega)-dimethyl-L-arginyl-[protein] + 2 S-adenosyl-L-homocysteine + 2 H(+). Its function is as follows. Methylates (mono- and asymmetric dimethylation) the guanidino nitrogens of arginyl residues in proteins. May methylate histone H3 at 'Arg-17' and activate transcription via chromatin remodeling. This Drosophila virilis (Fruit fly) protein is Histone-arginine methyltransferase CARMER (Art4).